The primary structure comprises 255 residues: Small ribosomal subunit protein uS2 (255 aa).

A disordered region spans residues 230-255 (QGSSGRDLGASSEVPVEPALEEAAEG).

This sequence belongs to the universal ribosomal protein uS2 family.

The sequence is that of Small ribosomal subunit protein uS2 from Rhizobium johnstonii (strain DSM 114642 / LMG 32736 / 3841) (Rhizobium leguminosarum bv. viciae).